The following is a 522-amino-acid chain: Zinc finger and BTB domain-containing protein 18 (522 aa).

The BTB domain maps to 24-91; that stretch reads CDCTVLVGDA…MYEGKLQFKD (68 aa). Residues 121–143 show a composition bias toward basic and acidic residues; the sequence is ATTEADSTKKEEDASSCSDKVES. A disordered region spans residues 121-165; the sequence is ATTEADSTKKEEDASSCSDKVESLSDGSSHMAGDLPSDEDEGEDE. S157 carries the phosphoserine modification. K273 is covalently cross-linked (Glycyl lysine isopeptide (Lys-Gly) (interchain with G-Cter in SUMO2)). The interaction with DNMT3A stretch occupies residues 310–427; the sequence is EPAHLAPLRE…TFSCMYTLKR (118 aa). 4 consecutive C2H2-type zinc fingers follow at residues 370–392, 410–432, 438–460, and 466–489; these read FMCP…LSTH, PTCS…ERTH, YTCT…AVVH, and HACK…RKFH. Phosphoserine is present on residues S516 and S517.

Belongs to the krueppel C2H2-type zinc-finger protein family. ZBTB18 subfamily. In terms of assembly, interacts with DNMT3A.

It localises to the nucleus. In terms of biological role, transcriptional repressor that plays a role in various developmental processes such as myogenesis and brain development. Specifically binds the consensus DNA sequence 5'-[AC]ACATCTG[GT][AC]-3' which contains the E box core, and acts by recruiting chromatin remodeling multiprotein complexes. Plays a key role in myogenesis by directly repressing the expression of ID2 and ID3, 2 inhibitors of skeletal myogenesis. Also involved in controlling cell division of progenitor cells and regulating the survival of postmitotic cortical neurons. May also play a role in the organization of chromosomes in the nucleus. The chain is Zinc finger and BTB domain-containing protein 18 (ZBTB18) from Bos taurus (Bovine).